We begin with the raw amino-acid sequence, 95 residues long: Co-chaperonin GroES (95 aa).

It belongs to the GroES chaperonin family. Heptamer of 7 subunits arranged in a ring. Interacts with the chaperonin GroEL.

It localises to the cytoplasm. In terms of biological role, together with the chaperonin GroEL, plays an essential role in assisting protein folding. The GroEL-GroES system forms a nano-cage that allows encapsulation of the non-native substrate proteins and provides a physical environment optimized to promote and accelerate protein folding. GroES binds to the apical surface of the GroEL ring, thereby capping the opening of the GroEL channel. This chain is Co-chaperonin GroES, found in Rickettsia bellii (strain RML369-C).